Consider the following 210-residue polypeptide: Proteasome subunit beta (210 aa).

The propeptide at 1 to 10 (MKELDQLTKG) is removed in mature form; by autocatalysis. The active-site Nucleophile is the threonine 11.

Belongs to the peptidase T1B family. As to quaternary structure, the 20S proteasome core is composed of 14 alpha and 14 beta subunits that assemble into four stacked heptameric rings, resulting in a barrel-shaped structure. The two inner rings, each composed of seven catalytic beta subunits, are sandwiched by two outer rings, each composed of seven alpha subunits. The catalytic chamber with the active sites is on the inside of the barrel. Has a gated structure, the ends of the cylinder being occluded by the N-termini of the alpha-subunits. Is capped at one or both ends by the proteasome regulatory ATPase, PAN.

Its subcellular location is the cytoplasm. The enzyme catalyses Cleavage of peptide bonds with very broad specificity.. The formation of the proteasomal ATPase PAN-20S proteasome complex, via the docking of the C-termini of PAN into the intersubunit pockets in the alpha-rings, triggers opening of the gate for substrate entry. Interconversion between the open-gate and close-gate conformations leads to a dynamic regulation of the 20S proteasome proteolysis activity. Component of the proteasome core, a large protease complex with broad specificity involved in protein degradation. In Methanopyrus kandleri (strain AV19 / DSM 6324 / JCM 9639 / NBRC 100938), this protein is Proteasome subunit beta.